The following is a 313-amino-acid chain: Acetaldehyde dehydrogenase (313 aa).

13–16 (SGNI) serves as a coordination point for NAD(+). Cys133 acts as the Acyl-thioester intermediate in catalysis. Residues 164 to 172 (SAGPGTRAN) and Asn291 each bind NAD(+).

It belongs to the acetaldehyde dehydrogenase family.

The enzyme catalyses acetaldehyde + NAD(+) + CoA = acetyl-CoA + NADH + H(+). The chain is Acetaldehyde dehydrogenase from Cupriavidus pinatubonensis (strain JMP 134 / LMG 1197) (Cupriavidus necator (strain JMP 134)).